A 218-amino-acid polypeptide reads, in one-letter code: Glycoprotein UL1 (218 aa).

The signal sequence occupies residues 1–27 (MGVQCNSKLLLLAVLITIILSSILVQA). Residues 178-198 (VATHVGWTATVVIIICVLTYV) traverse the membrane as a helical segment.

This sequence belongs to the RL11 family.

It localises to the virion membrane. This chain is Glycoprotein UL1 (UL1), found in Homo sapiens (Human).